A 398-amino-acid polypeptide reads, in one-letter code: Elongation factor Tu (398 aa).

The 199-residue stretch at 10-208 folds into the tr-type G domain; sequence KPHVNVGTIG…ALDDYIPEPE (199 aa). Positions 19–26 are G1; that stretch reads GHVDHGKT. 19 to 26 provides a ligand contact to GTP; the sequence is GHVDHGKT. Threonine 26 serves as a coordination point for Mg(2+). The segment at 61–65 is G2; it reads GITIA. Residues 82–85 are G3; the sequence is DCPG. Residues 82–86 and 137–140 each bind GTP; these read DCPGH and NKAD. The segment at 137–140 is G4; the sequence is NKAD. The G5 stretch occupies residues 175–177; that stretch reads SAL.

This sequence belongs to the TRAFAC class translation factor GTPase superfamily. Classic translation factor GTPase family. EF-Tu/EF-1A subfamily. Monomer.

It localises to the cytoplasm. It carries out the reaction GTP + H2O = GDP + phosphate + H(+). GTP hydrolase that promotes the GTP-dependent binding of aminoacyl-tRNA to the A-site of ribosomes during protein biosynthesis. This Marinobacter nauticus (strain ATCC 700491 / DSM 11845 / VT8) (Marinobacter aquaeolei) protein is Elongation factor Tu.